Consider the following 863-residue polypeptide: Glycerol-3-phosphate acyltransferase (863 aa).

The interval 1 to 29 (MPKKNSPLLPKETTTTQSSVDTSGSSNLT) is disordered. Over residues 12-29 (ETTTTQSSVDTSGSSNLT) the composition is skewed to polar residues. The HXXXXD motif signature appears at 343–348 (SHRSHM).

Belongs to the GPAT/DAPAT family.

Its subcellular location is the cell inner membrane. It carries out the reaction sn-glycerol 3-phosphate + an acyl-CoA = a 1-acyl-sn-glycero-3-phosphate + CoA. It functions in the pathway phospholipid metabolism; CDP-diacylglycerol biosynthesis; CDP-diacylglycerol from sn-glycerol 3-phosphate: step 1/3. This chain is Glycerol-3-phosphate acyltransferase, found in Xylella fastidiosa (strain M23).